The sequence spans 1058 residues: Carbamoyl phosphate synthase large chain (1058 aa).

The segment at 1–401 is carboxyphosphate synthetic domain; the sequence is MPKRTDIQKI…SLLKACRSLE (401 aa). Arg-129, Arg-169, Gly-175, Gly-176, Arg-208, Ile-210, Glu-215, Gly-241, Ile-242, His-243, Gln-284, and Glu-298 together coordinate ATP. One can recognise an ATP-grasp 1 domain in the interval 133 to 327; sequence KQLMEELEQP…IAKLAAKIAV (195 aa). Positions 284, 298, and 300 each coordinate Mg(2+). Gln-284, Glu-298, and Asn-300 together coordinate Mn(2+). The tract at residues 402–546 is oligomerization domain; sequence IGVHHNEIPE…YSTYGWENES (145 aa). Residues 547–929 are carbamoyl phosphate synthetic domain; the sequence is IRSDKESVLV…ALYKAFEASY (383 aa). Residues 671–861 enclose the ATP-grasp 2 domain; sequence EQALKELDIP…MAQVATKLIL (191 aa). ATP contacts are provided by Arg-707, Ser-746, Ile-748, Glu-752, Gly-777, Val-778, His-779, Ser-780, Gln-820, and Glu-832. The Mg(2+) site is built by Gln-820, Glu-832, and Asn-834. Residues Gln-820, Glu-832, and Asn-834 each contribute to the Mn(2+) site. One can recognise an MGS-like domain in the interval 930 to 1058; that stretch reads LHLPTFGNVV…ESRSFVTEAI (129 aa). Residues 930–1058 are allosteric domain; that stretch reads LHLPTFGNVV…ESRSFVTEAI (129 aa).

It belongs to the CarB family. In terms of assembly, composed of two chains; the small (or glutamine) chain promotes the hydrolysis of glutamine to ammonia, which is used by the large (or ammonia) chain to synthesize carbamoyl phosphate. Tetramer of heterodimers (alpha,beta)4. It depends on Mg(2+) as a cofactor. Mn(2+) is required as a cofactor.

The enzyme catalyses hydrogencarbonate + L-glutamine + 2 ATP + H2O = carbamoyl phosphate + L-glutamate + 2 ADP + phosphate + 2 H(+). It carries out the reaction hydrogencarbonate + NH4(+) + 2 ATP = carbamoyl phosphate + 2 ADP + phosphate + 2 H(+). It functions in the pathway amino-acid biosynthesis; L-arginine biosynthesis; carbamoyl phosphate from bicarbonate: step 1/1. The protein operates within pyrimidine metabolism; UMP biosynthesis via de novo pathway; (S)-dihydroorotate from bicarbonate: step 1/3. Its function is as follows. Large subunit of the glutamine-dependent carbamoyl phosphate synthetase (CPSase). CPSase catalyzes the formation of carbamoyl phosphate from the ammonia moiety of glutamine, carbonate, and phosphate donated by ATP, constituting the first step of 2 biosynthetic pathways, one leading to arginine and/or urea and the other to pyrimidine nucleotides. The large subunit (synthetase) binds the substrates ammonia (free or transferred from glutamine from the small subunit), hydrogencarbonate and ATP and carries out an ATP-coupled ligase reaction, activating hydrogencarbonate by forming carboxy phosphate which reacts with ammonia to form carbamoyl phosphate. The sequence is that of Carbamoyl phosphate synthase large chain from Streptococcus pneumoniae (strain P1031).